The primary structure comprises 1235 residues: MRSRSNSGVRLDGYARLVQQTILCYQNPVTGLLSASHEQKDAWVRDNIYSILAVWGLGMAYRKNADRDEDKAKAYELEQNVVKLMRGLLQCMMRQVDKVEKFKYTQSTKDSLHAKYNTATCSTVVGDDQWGHLQVDATSLFLLFLAQMTASGLRIIFTLDEVAFIQNLVFYIEAAYKVADYGMWERGDKTNQGIPELNASSVGMAKAALEAIDELDLFGAHGGRKSVIHVLPDEVEHCQSILFSMLPRASTSKEIDAGLLSIISFPAFAVEDANLVNVTKSEIISKLQGRYGCCRFLRDGYKTPREDPNRLHYDPAELKLFENIECEWPVFWTYFIIDGIFNGDALQVQEYQEALEGILIRGKDGIRLVPELYAIPPNKVDEEYKNPHTVDRVPLGKLPHLWGQSLYILSSLLAEGFLATGEIDPLNRRFSTSVKPDVVVQVTVLAENSHIKELLRKHGVDVQSIADIYPIRVQPGRILSHIYAKLGRNKNMKLSGRPYRHIGVLGTSKLYVIRNQIFTFTPQFTDQHHFYLALDNEMIVEMLRIELAYLCTCWRMTGRPTLTFPITHTMLTNDGSDIHSAVLSTIRKLEDGYFGGARVQLGNLSEFLTTSFYTYLTFLDPDCDEKLFDDASEGSFSPDSDSDLGGYLEETYNQVTESQDELDKYINHLLQSTYSKCHLPPLCKKMEDHNVFSAIHSTRDILSMMAKAKGLEVPFAPMTLPTKALSVHRKSLNLVDSPQPLLKRILKRLHWPKDERGDVDCEKLVEQLKDCCTLQDQADILYILYVLKGPSWDTALSGQHGVTVHNLLSELYGKAGLNQEWGLIRYISGLLRKKVEVLAEACADLLSHQKQLTVGLPPEPREKTISAPLPPEELTELIYEASGEDISIAVLTQEIVVYLAMYVRAQPALFVEMLRLRIGLIIQVMATELARSLNCSGEEASESLMNLSPFDMKNLLHHILSGKEFGVERSMRPIHSSASSPAISIHEVGHTGVTKTERSGINRLRSEMKQMTRRFSADEQFFPVSQTVSSSAYSKSVRSSTPSSPTGTSSSDSGGHHISWGERQGQWLRRRRLDGAINRVPVGFYQRVWKILQKCHGLSIDGYVLPSSTTREMTPQEIKFAVHVESVLNRVSQPEYRQLLVEAIMVLTLLSDTEMESIGGIIHVDQIVQMANQLFLQEQISTGAMDTLEKDQATGICHFFYDSAPSGAYGTMTYLTRAVASHLQELLPSSGCQTQ.

Residues serine 697, serine 731, and serine 737 each carry the phosphoserine modification. The calmodulin-binding stretch occupies residues 808-838; it reads LSELYGKAGLNQEWGLIRYISGLLRKKVEVL. Over residues 976–986 the composition is skewed to low complexity; that stretch reads SSASSPAISIH. A disordered region spans residues 976–1002; it reads SSASSPAISIHEVGHTGVTKTERSGIN. Residues serine 984, serine 1016, and serine 1044 each carry the phosphoserine modification. Positions 1032-1053 are enriched in low complexity; it reads AYSKSVRSSTPSSPTGTSSSDS. Residues 1032 to 1060 form a disordered region; it reads AYSKSVRSSTPSSPTGTSSSDSGGHHISW. Residues 1059–1099 form a calmodulin-binding region; it reads SWGERQGQWLRRRRLDGAINRVPVGFYQRVWKILQKCHGLS. Cysteine 1232 is lipidated: S-farnesyl cysteine.

The protein belongs to the phosphorylase b kinase regulatory chain family. As to quaternary structure, hexadecamer of 4 heterotetramers, each composed of alpha, beta, gamma, and delta subunits. Alpha (PHKA1 or PHKA2) and beta (PHKB) are regulatory subunits, gamma (PHKG1 or PHKG2) is the catalytic subunit, and delta is calmodulin. In terms of processing, although the final Cys may be farnesylated, the terminal tripeptide is probably not removed, and the C-terminus is not methylated. In terms of tissue distribution, predominantly expressed in liver and other non-muscle tissues.

It localises to the cell membrane. The protein operates within glycan biosynthesis; glycogen metabolism. By phosphorylation of various serine residues and by calcium. Phosphorylase b kinase catalyzes the phosphorylation of serine in certain substrates, including troponin I. The alpha chain may bind calmodulin. The protein is Phosphorylase b kinase regulatory subunit alpha, liver isoform (PHKA2) of Oryctolagus cuniculus (Rabbit).